We begin with the raw amino-acid sequence, 1382 residues long: DNA-directed RNA polymerase subunit beta (1382 aa).

This sequence belongs to the RNA polymerase beta chain family. The RNAP catalytic core consists of 2 alpha, 1 beta, 1 beta' and 1 omega subunit. When a sigma factor is associated with the core the holoenzyme is formed, which can initiate transcription.

It catalyses the reaction RNA(n) + a ribonucleoside 5'-triphosphate = RNA(n+1) + diphosphate. Functionally, DNA-dependent RNA polymerase catalyzes the transcription of DNA into RNA using the four ribonucleoside triphosphates as substrates. The sequence is that of DNA-directed RNA polymerase subunit beta from Paracoccus denitrificans (strain Pd 1222).